We begin with the raw amino-acid sequence, 133 residues long: Fluoride-specific ion channel FluC (133 aa).

The next 4 helical transmembrane spans lie at 4–24, 35–55, 66–86, and 107–127; these read LLWI…LSVL, WGTL…WVLA, VFIF…SLES, and VLGL…LGGP. The Na(+) site is built by Gly-74 and Thr-77.

It belongs to the fluoride channel Fluc/FEX (TC 1.A.43) family.

The protein resides in the cell inner membrane. The catalysed reaction is fluoride(in) = fluoride(out). Na(+) is not transported, but it plays an essential structural role and its presence is essential for fluoride channel function. Fluoride-specific ion channel. Important for reducing fluoride concentration in the cell, thus reducing its toxicity. The polypeptide is Fluoride-specific ion channel FluC (Salinibacter ruber (strain DSM 13855 / M31)).